A 256-amino-acid polypeptide reads, in one-letter code: Thiazole synthase (256 aa).

The active-site Schiff-base intermediate with DXP is the lysine 98. 1-deoxy-D-xylulose 5-phosphate contacts are provided by residues glycine 159, 185–186, and 207–208; these read AG and NT.

It belongs to the ThiG family. In terms of assembly, homotetramer. Forms heterodimers with either ThiH or ThiS.

It localises to the cytoplasm. It catalyses the reaction [ThiS sulfur-carrier protein]-C-terminal-Gly-aminoethanethioate + 2-iminoacetate + 1-deoxy-D-xylulose 5-phosphate = [ThiS sulfur-carrier protein]-C-terminal Gly-Gly + 2-[(2R,5Z)-2-carboxy-4-methylthiazol-5(2H)-ylidene]ethyl phosphate + 2 H2O + H(+). It participates in cofactor biosynthesis; thiamine diphosphate biosynthesis. Catalyzes the rearrangement of 1-deoxy-D-xylulose 5-phosphate (DXP) to produce the thiazole phosphate moiety of thiamine. Sulfur is provided by the thiocarboxylate moiety of the carrier protein ThiS. In vitro, sulfur can be provided by H(2)S. The polypeptide is Thiazole synthase (thiG) (Bacillus subtilis (strain 168)).